Consider the following 102-residue polypeptide: Protein GOLVEN 4 (102 aa).

Residues 1-27 (MEMKKWSYANLITLALLFLFFIILLLA) form the signal peptide. Residues 28 to 89 (FQGGSRDDDH…QEREVYVELR (62 aa)) constitute a propeptide that is removed on maturation. A disordered region spans residues 56–78 (KSLKPINPTKKNGFEYPDQGSHD). Tyr91 bears the Sulfotyrosine mark. The residue at position 99 (Pro99) is a Hydroxyproline.

The protein belongs to the RGF family. As to quaternary structure, binds to LRR receptor-like serine/threonine-protein kinases to trigger their dimerization with SERK proteins and subsequent signaling. In terms of tissue distribution, expressed in roots and sepals.

Its subcellular location is the secreted. In terms of biological role, signaling peptide (root growth factor) that promotes root hairs formation and growth. Maintains the postembryonic root stem cell niche. Regulates the pattern of root growth and lateral root development by modulating the length and the number of cortical cells in the root apical meristem (RAM), and the anticlinal asymmetric cell divisions in lateral root initiation cells. The protein is Protein GOLVEN 4 of Arabidopsis thaliana (Mouse-ear cress).